Consider the following 646-residue polypeptide: Lipoteichoic acid synthase (646 aa).

Topologically, residues 1 to 7 (MKLHKKK) are cytoplasmic. The helical transmembrane segment at 8–28 (LTLFAFFILTVLTVTLKTYFS) threads the bilayer. Residues 29 to 43 (YYVDFSLGVKGLVQN) are Extracellular-facing. A helical transmembrane segment spans residues 44 to 64 (LILLMNPYSLIALVLSIFLFF). Residues 65–68 (KGKK) lie on the Cytoplasmic side of the membrane. A helical membrane pass occupies residues 69–89 (AFWFIFIGGFILTFLLYANVV). Over 90-119 (YFRFFSDFLTFSTLNQAGNVESMGGAVTAS) the chain is Extracellular. Residues 120–140 (FKWYDFVYFIDTIIYLFVLIF) form a helical membrane-spanning segment. Residues 141–153 (KQKWLDKRVFSKK) lie on the Cytoplasmic side of the membrane. Residues 154–174 (FVPVVMAASIALFFLNLAFAE) form a helical membrane-spanning segment. Residues 175–646 (SDRPELLTRT…KTGPKGQERK (472 aa)) are Extracellular-facing. Positions 255 and 300 each coordinate Mn(2+). Thr-300 is an active-site residue. Residue His-416 participates in substrate binding. The Mn(2+) site is built by Asp-475 and His-476. A disordered region spans residues 579–646 (IYDNKNNEPM…KTGPKGQERK (68 aa)). 2 stretches are compositionally biased toward basic and acidic residues: residues 580-607 (YDNK…KDLQ) and 625-646 (DFDK…QERK).

The protein belongs to the LTA synthase family. Post-translationally, proteolytically cleaved.

The protein localises to the cell membrane. It localises to the secreted. Its pathway is cell wall biogenesis; lipoteichoic acid biosynthesis. Its function is as follows. Catalyzes the polymerization of lipoteichoic acid (LTA) polyglycerol phosphate, a reaction that presumably uses phosphatidylglycerol (PG) as substrate. Is required for staphylococcal growth and cell division process. The polypeptide is Lipoteichoic acid synthase (ltaS) (Staphylococcus saprophyticus subsp. saprophyticus (strain ATCC 15305 / DSM 20229 / NCIMB 8711 / NCTC 7292 / S-41)).